The chain runs to 159 residues: Ribosomal RNA large subunit methyltransferase H (159 aa).

S-adenosyl-L-methionine-binding positions include Leu76, Gly108, and 127-132 (FSKMTF).

Belongs to the RNA methyltransferase RlmH family. As to quaternary structure, homodimer.

It localises to the cytoplasm. The enzyme catalyses pseudouridine(1915) in 23S rRNA + S-adenosyl-L-methionine = N(3)-methylpseudouridine(1915) in 23S rRNA + S-adenosyl-L-homocysteine + H(+). In terms of biological role, specifically methylates the pseudouridine at position 1915 (m3Psi1915) in 23S rRNA. This Clostridium botulinum (strain Alaska E43 / Type E3) protein is Ribosomal RNA large subunit methyltransferase H.